The following is a 339-amino-acid chain: Anthranilate phosphoribosyltransferase (339 aa).

5-phospho-alpha-D-ribose 1-diphosphate is bound by residues G79, 82 to 83 (GD), S87, 89 to 92 (NIST), 107 to 115 (KHGNRSVSS), and S119. An anthranilate-binding site is contributed by G79. S91 lines the Mg(2+) pocket. Anthranilate is bound at residue N110. Anthranilate is bound at residue R165. D224 and E225 together coordinate Mg(2+).

It belongs to the anthranilate phosphoribosyltransferase family. Homodimer. Mg(2+) is required as a cofactor.

The enzyme catalyses N-(5-phospho-beta-D-ribosyl)anthranilate + diphosphate = 5-phospho-alpha-D-ribose 1-diphosphate + anthranilate. It participates in amino-acid biosynthesis; L-tryptophan biosynthesis; L-tryptophan from chorismate: step 2/5. In terms of biological role, catalyzes the transfer of the phosphoribosyl group of 5-phosphorylribose-1-pyrophosphate (PRPP) to anthranilate to yield N-(5'-phosphoribosyl)-anthranilate (PRA). The chain is Anthranilate phosphoribosyltransferase from Exiguobacterium sibiricum (strain DSM 17290 / CCUG 55495 / CIP 109462 / JCM 13490 / 255-15).